We begin with the raw amino-acid sequence, 73 residues long: Maltose-binding periplasmic protein (73 aa).

A signal peptide spans 1 to 30 (MMTKTNLKMGARTLALSVLATLVLSASALA).

Belongs to the bacterial solute-binding protein 1 family.

It is found in the periplasm. Functionally, involved in the high-affinity maltose membrane transport system. Initial receptor for the active transport of and chemotaxis toward maltooligosaccharides. In Photorhabdus luminescens (Xenorhabdus luminescens), this protein is Maltose-binding periplasmic protein (malE).